We begin with the raw amino-acid sequence, 877 residues long: Probable linoleate 9S-lipoxygenase 4 (877 aa).

Residues 38–165 (GDFHASLLDG…NYQYERVFFA (128 aa)) form the PLAT domain. Positions 168 to 877 (TYLPSKMPAP…AMGIPNSISI (710 aa)) constitute a Lipoxygenase domain. Positions 229–252 (GSQELPYPRRGRTGRAPTKTDPNT) are disordered. Fe cation is bound by residues His-528, His-533, His-719, Asn-723, and Ile-877.

It belongs to the lipoxygenase family. The cofactor is Fe cation.

It catalyses the reaction (9Z,12Z)-octadecadienoate + O2 = (9S)-hydroperoxy-(10E,12Z)-octadecadienoate. It functions in the pathway lipid metabolism; oxylipin biosynthesis. Its function is as follows. Plant lipoxygenase may be involved in a number of diverse aspects of plant physiology including growth and development, pest resistance, and senescence or responses to wounding. Catalyzes the hydroperoxidation of lipids containing a cis,cis-1,4-pentadiene structure. The sequence is that of Probable linoleate 9S-lipoxygenase 4 from Oryza sativa subsp. japonica (Rice).